A 509-amino-acid polypeptide reads, in one-letter code: Poly(A) RNA polymerase GLD2-A (509 aa).

Positions 88 to 107 (PGSPSSSFQNRKRRSDEGNV) are disordered. Mg(2+)-binding residues include aspartate 240 and aspartate 242. The region spanning 409–462 (LGDLLLGFLKYFAVEFDWSKDIISVREGKALPRSDDYLWRNKYICVEEPFDGTN) is the PAP-associated domain.

The protein belongs to the DNA polymerase type-B-like family. GLD2 subfamily. Component of a complex at least composed of cpeb1, cpsf1, tent2/gld2, pabpc1/ePAB, parn and sympk. Following oocyte maturation, parn is expelled from the complex. Interacts with rbfox2 and sympk. It depends on Mg(2+) as a cofactor. Mn(2+) serves as cofactor.

The protein localises to the cytoplasm. The catalysed reaction is RNA(n) + ATP = RNA(n)-3'-adenine ribonucleotide + diphosphate. Cytoplasmic poly(A) RNA polymerase that adds successive AMP monomers to the 3'-end of specific RNAs, forming a poly(A) tail. In contrast to the canonical nuclear poly(A) RNA polymerase, it only adds poly(A) to selected cytoplasmic mRNAs during oocyte maturation. Plays a central role during oocyte maturation by mediating polyadenylation of dormant mRNAs, which contain 5'AAUAAA-3' sequence in their 3'UTR. In immature oocytes, polyadenylation of poly(A) tails is counteracted by the ribonuclease parn. During maturation parn is excluded from the ribonucleoprotein complex, allowing poly(A) elongation and activation of mRNAs. May not play a role in replication-dependent histone mRNA degradation. This Xenopus laevis (African clawed frog) protein is Poly(A) RNA polymerase GLD2-A (tent2-a).